A 405-amino-acid polypeptide reads, in one-letter code: CRS2-associated factor 1, mitochondrial (405 aa).

The transit peptide at 1–20 (MFLIRLSRHNPSSFTLLTRR) directs the protein to the mitochondrion. Residues 32–75 (RDLYNFQSPPPLSSSASENPDFNQKNNNKKKPKPQYRPPSSLEG) are disordered. CRM domains lie at 157-255 (ASLT…KRPK) and 277-373 (DGLS…KEDD). The interval 384-405 (SIDSDVDLSCSRGAQDSPDETT) is disordered.

As to quaternary structure, part of large ribonucleo-protein complexes that include group IIB introns.

It is found in the mitochondrion. Its function is as follows. May be involved in the splicing of group IIB introns in mitochondria. This chain is CRS2-associated factor 1, mitochondrial, found in Arabidopsis thaliana (Mouse-ear cress).